The primary structure comprises 262 residues: Pyridoxine 5'-phosphate synthase (262 aa).

N6 contributes to the 3-amino-2-oxopropyl phosphate binding site. D8–H9 serves as a coordination point for 1-deoxy-D-xylulose 5-phosphate. Residue R17 participates in 3-amino-2-oxopropyl phosphate binding. The active-site Proton acceptor is the H43. The 1-deoxy-D-xylulose 5-phosphate site is built by R45 and H50. Residue E70 is the Proton acceptor of the active site. T102 provides a ligand contact to 1-deoxy-D-xylulose 5-phosphate. H215 acts as the Proton donor in catalysis. Residues G216 and G237–H238 each bind 3-amino-2-oxopropyl phosphate.

Belongs to the PNP synthase family. Homooctamer; tetramer of dimers.

Its subcellular location is the cytoplasm. The enzyme catalyses 3-amino-2-oxopropyl phosphate + 1-deoxy-D-xylulose 5-phosphate = pyridoxine 5'-phosphate + phosphate + 2 H2O + H(+). Its pathway is cofactor biosynthesis; pyridoxine 5'-phosphate biosynthesis; pyridoxine 5'-phosphate from D-erythrose 4-phosphate: step 5/5. In terms of biological role, catalyzes the complicated ring closure reaction between the two acyclic compounds 1-deoxy-D-xylulose-5-phosphate (DXP) and 3-amino-2-oxopropyl phosphate (1-amino-acetone-3-phosphate or AAP) to form pyridoxine 5'-phosphate (PNP) and inorganic phosphate. In Helicobacter pylori (strain J99 / ATCC 700824) (Campylobacter pylori J99), this protein is Pyridoxine 5'-phosphate synthase.